Reading from the N-terminus, the 271-residue chain is Malonyl-[acyl-carrier protein] O-methyltransferase (271 aa).

The protein belongs to the methyltransferase superfamily.

It carries out the reaction malonyl-[ACP] + S-adenosyl-L-methionine = malonyl-[ACP] methyl ester + S-adenosyl-L-homocysteine. Its pathway is cofactor biosynthesis; biotin biosynthesis. In terms of biological role, converts the free carboxyl group of a malonyl-thioester to its methyl ester by transfer of a methyl group from S-adenosyl-L-methionine (SAM). It allows to synthesize pimeloyl-ACP via the fatty acid synthetic pathway. This is Malonyl-[acyl-carrier protein] O-methyltransferase from Halalkalibacterium halodurans (strain ATCC BAA-125 / DSM 18197 / FERM 7344 / JCM 9153 / C-125) (Bacillus halodurans).